The chain runs to 857 residues: Envelope glycoprotein gp160 (857 aa).

The N-terminal stretch at M1 to A22 is a signal peptide. At Q23–Y671 the chain is on the extracellular side. A glycan (N-linked (GlcNAc...) asparagine; by host) is linked at N36. Cysteines 43 and 56 form a disulfide. N69, N78, N113, N121, N134, N142, N159, N186, N198, N230, N233, N264, N270, N281, N292, N302, N358, N364, N391, N440, and N455 each carry an N-linked (GlcNAc...) asparagine; by host glycan. Disulfide bonds link C100/C206, C107/C197, C112/C156, C219/C249, and C229/C241. The interval C112–D155 is V1. Residues C156 to C197 are V2. The V3 stretch occupies residues C297–W330. An intrachain disulfide couples C297 to C331. Intrachain disulfides connect C383/C439 and C390/C412. The tract at residues C390–C412 is V4. The V5 stretch occupies residues D454 to F461. Residues G504 to A524 are fusion peptide. The tract at residues L567 to R583 is immunosuppression. N603, N612, and N628 each carry an N-linked (GlcNAc...) asparagine; by host glycan. Residues Q616–M644 are a coiled coil. The interval K649–Q670 is MPER; binding to GalCer. Residues G672–L692 form a helical membrane-spanning segment. At S693–L857 the chain is on the cytoplasmic side. The short motif at Y699–V702 is the YXXV motif; contains endocytosis signal element. C765 carries S-palmitoyl cysteine; by host lipidation. A Di-leucine internalization motif motif is present at residues L856–L857.

As to quaternary structure, the mature envelope protein (Env) consists of a homotrimer of non-covalently associated gp120-gp41 heterodimers. The resulting complex protrudes from the virus surface as a spike. There seems to be as few as 10 spikes on the average virion. Interacts with human CD4, CCR5 and CXCR4, to form a P4HB/PDI-CD4-CXCR4-gp120 complex. Gp120 also interacts with the C-type lectins CD209/DC-SIGN and CLEC4M/DC-SIGNR (collectively referred to as DC-SIGN(R)). Gp120 and gp41 interact with GalCer. The mature envelope protein (Env) consists of a homotrimer of non-covalently associated gp120-gp41 heterodimers. The resulting complex protrudes from the virus surface as a spike. There seems to be as few as 10 spikes on the average virion. In terms of processing, specific enzymatic cleavages in vivo yield mature proteins. Envelope glycoproteins are synthesized as an inactive precursor that is heavily N-glycosylated and processed likely by host cell furin in the Golgi to yield the mature SU and TM proteins. The cleavage site between SU and TM requires the minimal sequence [KR]-X-[KR]-R. Post-translationally, palmitoylation of the transmembrane protein and of Env polyprotein (prior to its proteolytic cleavage) is essential for their association with host cell membrane lipid rafts. Palmitoylation is therefore required for envelope trafficking to classical lipid rafts, but not for viral replication.

It localises to the virion membrane. It is found in the host cell membrane. The protein resides in the host endosome membrane. The surface protein gp120 (SU) attaches the virus to the host lymphoid cell by binding to the primary receptor CD4. This interaction induces a structural rearrangement creating a high affinity binding site for a chemokine coreceptor like CXCR4 and/or CCR5. This peculiar 2 stage receptor-interaction strategy allows gp120 to maintain the highly conserved coreceptor-binding site in a cryptic conformation, protected from neutralizing antibodies. Since CD4 also displays a binding site for the disulfide-isomerase P4HB/PDI, a P4HB/PDI-CD4-CXCR4-gp120 complex may form. In that complex, P4HB/PDI could reach and reduce gp120 disulfide bonds, causing major conformational changes in gp120. TXN, another PDI family member could also be involved in disulfide rearrangements in Env during fusion. These changes are transmitted to the transmembrane protein gp41 and are thought to activate its fusogenic potential by unmasking its fusion peptide. Its function is as follows. The surface protein gp120 is a ligand for CD209/DC-SIGN and CLEC4M/DC-SIGNR, which are respectively found on dendritic cells (DCs), and on endothelial cells of liver sinusoids and lymph node sinuses. These interactions allow capture of viral particles at mucosal surfaces by these cells and subsequent transmission to permissive cells. DCs are professional antigen presenting cells, critical for host immunity by inducing specific immune responses against a broad variety of pathogens. They act as sentinels in various tissues where they take up antigen, process it, and present it to T-cells following migration to lymphoid organs. HIV subverts the migration properties of dendritic cells to gain access to CD4+ T-cells in lymph nodes. Virus transmission to permissive T-cells occurs either in trans (without DCs infection, through viral capture and transmission), or in cis (following DCs productive infection, through the usual CD4-gp120 interaction), thereby inducing a robust infection. In trans infection, bound virions remain infectious over days and it is proposed that they are not degraded, but protected in non-lysosomal acidic organelles within the DCs close to the cell membrane thus contributing to the viral infectious potential during DCs' migration from the periphery to the lymphoid tissues. On arrival at lymphoid tissues, intact virions recycle back to DCs' cell surface allowing virus transmission to CD4+ T-cells. Virion capture also seems to lead to MHC-II-restricted viral antigen presentation, and probably to the activation of HIV-specific CD4+ cells. In terms of biological role, the transmembrane protein gp41 (TM) acts as a class I viral fusion protein. Under the current model, the protein has at least 3 conformational states: pre-fusion native state, pre-hairpin intermediate state, and post-fusion hairpin state. During fusion of viral and target intracellular membranes, the coiled coil regions (heptad repeats) assume a trimer-of-hairpins structure, positioning the fusion peptide in close proximity to the C-terminal region of the ectodomain. The formation of this structure appears to drive apposition and subsequent fusion of viral and target cell membranes. Complete fusion occurs in host cell endosomes and is dynamin-dependent, however some lipid transfer might occur at the plasma membrane. The virus undergoes clathrin-dependent internalization long before endosomal fusion, thus minimizing the surface exposure of conserved viral epitopes during fusion and reducing the efficacy of inhibitors targeting these epitopes. Membranes fusion leads to delivery of the nucleocapsid into the cytoplasm. Functionally, the envelope glycoprotein gp160 precursor down-modulates cell surface CD4 antigen by interacting with it in the endoplasmic reticulum and blocking its transport to the cell surface. The gp120-gp41 heterodimer seems to contribute to T-cell depletion during HIV-1 infection. The envelope glycoproteins expressed on the surface of infected cells induce apoptosis through an interaction with uninfected cells expressing the receptor (CD4) and the coreceptors CXCR4 or CCR5. This type of bystander killing may be obtained by at least three distinct mechanisms. First, the interaction between the 2 cells can induce cellular fusion followed by nuclear fusion within the syncytium. Syncytia are condemned to die from apoptosis. Second, the 2 interacting cells may not fuse entirely and simply exchange plasma membrane lipids, after a sort of hemifusion process, followed by rapid death. Third, it is possible that virus-infected cells, on the point of undergoing apoptosis, fuse with CD4-expressing cells, in which case apoptosis is rapidly transmitted from one cell to the other and thus occurs in a sort of contagious fashion. Its function is as follows. The gp120-gp41 heterodimer allows rapid transcytosis of the virus through CD4 negative cells such as simple epithelial monolayers of the intestinal, rectal and endocervical epithelial barriers. Both gp120 and gp41 specifically recognize glycosphingolipids galactosyl-ceramide (GalCer) or 3' sulfo-galactosyl-ceramide (GalS) present in the lipid rafts structures of epithelial cells. Binding to these alternative receptors allows the rapid transcytosis of the virus through the epithelial cells. This transcytotic vesicle-mediated transport of virions from the apical side to the basolateral side of the epithelial cells does not involve infection of the cells themselves. The chain is Envelope glycoprotein gp160 (env) from Human immunodeficiency virus type 2 subtype A (isolate KR) (HIV-2).